The following is a 585-amino-acid chain: A-type ATP synthase subunit A (585 aa).

ATP is bound at residue 231–238 (GPFGSGKT).

This sequence belongs to the ATPase alpha/beta chains family. As to quaternary structure, has multiple subunits with at least A(3), B(3), C, D, E, F, H, I and proteolipid K(x).

It localises to the cell membrane. The catalysed reaction is ATP + H2O + 4 H(+)(in) = ADP + phosphate + 5 H(+)(out). Its function is as follows. Component of the A-type ATP synthase that produces ATP from ADP in the presence of a proton gradient across the membrane. The A chain is the catalytic subunit. This chain is A-type ATP synthase subunit A, found in Thermococcus onnurineus (strain NA1).